The chain runs to 620 residues: Translocator protein BipB (620 aa).

A disordered region spans residues 58–95 (QCDAQPAAHDARLDDKPALRAPQERDAPPLGASDTGSR). Basic and acidic residues predominate over residues 66-84 (HDARLDDKPALRAPQERDA). Residues 309-339 (EMQAKREAELQKKSDEYQAQVKKAEEMQKTM) are a coiled coil. The next 3 helical transmembrane spans lie at 355–375 (FAAA…GLAL), 401–421 (AILK…LVAC), and 430–450 (LAGA…AAFV).

It belongs to the SctE/SipB/YopB family.

The protein resides in the secreted. The protein localises to the host membrane. Functionally, plays a role in the bacterium-induced formation of multinucleated giant cell (MNGC), which is formed after host cell fusion, as well as in the intercellular spreading of bacteria and in the induction of apoptosis in macrophages. May act in concert with other effector proteins to induce fusion of host cell membranes. The chain is Translocator protein BipB (bipB) from Burkholderia pseudomallei (strain 1710b).